A 354-amino-acid chain; its full sequence is UDP-galactose transporter homolog 1 (354 aa).

The next 5 helical transmembrane spans lie at 6–26 (GGSI…FLTW), 54–74 (LVIN…YSVV), 95–112 (FFKS…SSPL), 123–143 (LAYL…HFVL), and 148–168 (FPLY…IFTL). N-linked (GlcNAc...) asparagine glycosylation is present at asparagine 202. The next 4 helical transmembrane spans lie at 227–247 (YLMC…ALIF), 268–288 (MNIL…FIIL), 295–317 (ILIT…LFGH), and 321–340 (GLQW…EALV).

This sequence belongs to the nucleotide-sugar transporter family. SLC35B subfamily.

Its subcellular location is the endoplasmic reticulum membrane. Its function is as follows. May be involved in specific transport of UDP-Gal from the cytosol to the Golgi lumen. Involved in the maintenance of optimal conditions for the folding of secretory pathway proteins in the endoplasmic reticulum. The polypeptide is UDP-galactose transporter homolog 1 (HUT1) (Debaryomyces hansenii (strain ATCC 36239 / CBS 767 / BCRC 21394 / JCM 1990 / NBRC 0083 / IGC 2968) (Yeast)).